We begin with the raw amino-acid sequence, 304 residues long: Non-specific ribonucleoside hydrolase RihC (304 aa).

Residue His233 is part of the active site.

The protein belongs to the IUNH family. RihC subfamily.

In terms of biological role, hydrolyzes both purine and pyrimidine ribonucleosides with a broad-substrate specificity. This chain is Non-specific ribonucleoside hydrolase RihC, found in Klebsiella pneumoniae subsp. pneumoniae (strain ATCC 700721 / MGH 78578).